The following is a 278-amino-acid chain: 2,5-diketo-D-gluconic acid reductase A (278 aa).

Tyr-50 acts as the Proton donor in catalysis. Position 108 (His-108) interacts with substrate. Residue 188–242 (GPLGQGKYDLFGAEPVTAAAAAHGKTPAQAVLRWHLQKGFVVFPKSVRRERLEEN) participates in NADP(+) binding. The disordered stretch occupies residues 259 to 278 (DAMDPGDGSGRVSAHPDEVD).

Belongs to the aldo/keto reductase family. As to quaternary structure, monomer.

Its subcellular location is the cytoplasm. It catalyses the reaction 2-dehydro-L-idonate + NADP(+) = 2,5-didehydro-D-gluconate + NADPH + H(+). With respect to regulation, inhibited by Zn(2+), Fe(3+), Cu(2+) and Ni(2+). Functionally, catalyzes the reduction of 2,5-diketo-D-gluconic acid (25DKG) to 2-keto-L-gulonic acid (2KLG). 5-keto-D-fructose and dihydroxyacetone can also serve as substrates. 25DKGR-A exhibits a greater selectivity for the substrate and higher thermal stability than 25DKGR-B. The chain is 2,5-diketo-D-gluconic acid reductase A (dkgA) from Corynebacterium sp. (strain ATCC 31090).